A 327-amino-acid chain; its full sequence is MESFAGKELQHSGAVHAYQLDGKGGITPIGEQDVVNSEKPCWLHLDSTLPASARWLNKTTLVPDSVRNALAGESIRPRVTRLGDGTLITLRSINLNANARPDQLVAVRVFITDKLIISTRRRKVLAIDEILTDLKEGNGPTDSGSWLVSIAESLTDHTSEFIDDLHEKIIDLEDDLLEQKIPPRGELALIRKQLIVLRRYMTPQRDVFSRISGEKLPWMQDDDRRRMQEIADRLGRGLEDLDASIARTTVLSDEITALMTEAMNRRTYTMSLLAMVFLPTTFLTGLFGVNLGGIPGGDAPFGFFTFCLMLVILVGGVAWWLKRSKWL.

At 1 to 271 the chain is on the cytoplasmic side; that stretch reads MESFAGKELQ…AMNRRTYTMS (271 aa). A helical transmembrane segment spans residues 272–292; the sequence is LLAMVFLPTTFLTGLFGVNLG. The Periplasmic portion of the chain corresponds to 293–300; sequence GIPGGDAP. The chain crosses the membrane as a helical span at residues 301–321; it reads FGFFTFCLMLVILVGGVAWWL. The Cytoplasmic portion of the chain corresponds to 322 to 327; it reads KRSKWL.

It belongs to the CorA metal ion transporter (MIT) (TC 1.A.35) family.

The protein resides in the cell inner membrane. It carries out the reaction Zn(2+)(out) + H(+)(out) = Zn(2+)(in) + H(+)(in). In terms of biological role, zinc transporter. Acts as a Zn(2+):proton symporter, which likely mediates zinc ion uptake. The polypeptide is Zinc transport protein ZntB (Pectobacterium carotovorum subsp. carotovorum (strain PC1)).